A 654-amino-acid chain; its full sequence is Fructose-1,6-bisphosphatase class 3 (654 aa).

The disordered stretch occupies residues 288 to 307 (NPAFKPKKRPDKHERLTQRE). The span at 298-307 (DKHERLTQRE) shows a compositional bias: basic and acidic residues.

The protein belongs to the FBPase class 3 family. It depends on Mn(2+) as a cofactor.

The enzyme catalyses beta-D-fructose 1,6-bisphosphate + H2O = beta-D-fructose 6-phosphate + phosphate. The protein operates within carbohydrate biosynthesis; gluconeogenesis. The protein is Fructose-1,6-bisphosphatase class 3 of Staphylococcus aureus (strain bovine RF122 / ET3-1).